The chain runs to 351 residues: Probable glucuronosyltransferase Os10g0205300 (351 aa).

Topologically, residues 1–11 (MAAPPCPPRRP) are cytoplasmic. A helical; Signal-anchor for type II membrane protein transmembrane segment spans residues 12–32 (ISAPCFLLCFLLGFVAGLFPF). Residues 33-351 (AHRHLHLDLH…PLKKEARPLL (319 aa)) are Lumenal-facing. The segment at 138 to 169 (SSPVPDAPQDRPRRRGRRQDRPAVDSRARQRN) is disordered. Residues 156–169 (QDRPAVDSRARQRN) are compositionally biased toward basic and acidic residues. N259 is a glycosylation site (N-linked (GlcNAc...) asparagine).

Belongs to the glycosyltransferase 43 family.

Its subcellular location is the golgi apparatus membrane. In terms of biological role, involved in the synthesis of glucuronoxylan hemicellulose in secondary cell walls. The chain is Probable glucuronosyltransferase Os10g0205300 from Oryza sativa subsp. japonica (Rice).